Reading from the N-terminus, the 213-residue chain is Uracil phosphoribosyltransferase (213 aa).

5-phospho-alpha-D-ribose 1-diphosphate contacts are provided by residues arginine 77, arginine 102, and 129–137 (DPMLATGGS). Uracil-binding positions include isoleucine 198 and 203 to 205 (GDA). Position 204 (aspartate 204) interacts with 5-phospho-alpha-D-ribose 1-diphosphate.

It belongs to the UPRTase family. Mg(2+) serves as cofactor.

The enzyme catalyses UMP + diphosphate = 5-phospho-alpha-D-ribose 1-diphosphate + uracil. Its pathway is pyrimidine metabolism; UMP biosynthesis via salvage pathway; UMP from uracil: step 1/1. Its activity is regulated as follows. Allosterically activated by GTP. Catalyzes the conversion of uracil and 5-phospho-alpha-D-ribose 1-diphosphate (PRPP) to UMP and diphosphate. In Mycobacteroides abscessus (strain ATCC 19977 / DSM 44196 / CCUG 20993 / CIP 104536 / JCM 13569 / NCTC 13031 / TMC 1543 / L948) (Mycobacterium abscessus), this protein is Uracil phosphoribosyltransferase.